The primary structure comprises 148 residues: Probable glucosamine 6-phosphate N-acetyltransferase (148 aa).

The 146-residue stretch at 3–148 (ISINELNFDD…KQMALYLNGK (146 aa)) folds into the N-acetyltransferase domain. Substrate-binding positions include threonine 25, 72–75 (KFIH), and 84–86 (EDV). Acetyl-CoA-binding positions include 86–88 (VVV) and 94–99 (LHGIGK). Substrate-binding positions include 115–116 (YK) and aspartate 120. 129-131 (YCK) serves as a coordination point for acetyl-CoA. Glutamate 138 contributes to the substrate binding site.

Belongs to the acetyltransferase family. GNA1 subfamily.

It carries out the reaction D-glucosamine 6-phosphate + acetyl-CoA = N-acetyl-D-glucosamine 6-phosphate + CoA + H(+). Its pathway is nucleotide-sugar biosynthesis; UDP-N-acetyl-alpha-D-glucosamine biosynthesis; N-acetyl-alpha-D-glucosamine 1-phosphate from alpha-D-glucosamine 6-phosphate (route I): step 1/2. This is Probable glucosamine 6-phosphate N-acetyltransferase from Acanthamoeba polyphaga (Amoeba).